Here is a 732-residue protein sequence, read N- to C-terminus: Elongation factor 2 (732 aa).

In terms of domain architecture, tr-type G spans 19 to 260; sequence ERIRNMGIAA…MVVRHLPNPL (242 aa). GTP contacts are provided by residues 28–35, 94–98, and 148–151; these read AHIDHGKT, DTPGH, and NKVD. Diphthamide is present on His597.

Belongs to the TRAFAC class translation factor GTPase superfamily. Classic translation factor GTPase family. EF-G/EF-2 subfamily.

It is found in the cytoplasm. Its function is as follows. Catalyzes the GTP-dependent ribosomal translocation step during translation elongation. During this step, the ribosome changes from the pre-translocational (PRE) to the post-translocational (POST) state as the newly formed A-site-bound peptidyl-tRNA and P-site-bound deacylated tRNA move to the P and E sites, respectively. Catalyzes the coordinated movement of the two tRNA molecules, the mRNA and conformational changes in the ribosome. This chain is Elongation factor 2, found in Thermococcus onnurineus (strain NA1).